The chain runs to 37 residues: Large ribosomal subunit protein bL36 (37 aa).

The protein belongs to the bacterial ribosomal protein bL36 family.

In Prochlorococcus marinus (strain MIT 9313), this protein is Large ribosomal subunit protein bL36.